The sequence spans 316 residues: Metal tolerance protein 8 (316 aa).

Over 1-15 (MGPVRHILNERKSRK) the chain is Cytoplasmic. The helical transmembrane segment at 16–36 (IAAFLLINTAYMFVEFTSGFM) threads the bilayer. The Vacuolar portion of the chain corresponds to 37–45 (SDSLGLISD). A helical transmembrane segment spans residues 46–66 (ACHMLFDCAALAIGLYASYIA). The Cytoplasmic segment spans residues 67-80 (RLPANGLYNYGRGR). The chain crosses the membrane as a helical span at residues 81 to 101 (FEVLSGYVNAVFLVLVGALIV). At 102 to 116 (LESFERILEPREIST) the chain is on the vacuolar side. Residues 117–137 (SSLLTVSIGGLVVNVIGLVFF) form a helical membrane-spanning segment. Residues 138–176 (HEEHHHAHGEAHSCNGGLQSSENHNKSRNRHHIDHNMEG) are Cytoplasmic-facing. A disordered region spans residues 147 to 166 (EAHSCNGGLQSSENHNKSRN). A helical membrane pass occupies residues 177–197 (IFLHVLADTMGSVGVVISTLL). At 198–202 (IKYKG) the chain is on the vacuolar side. A helical transmembrane segment spans residues 203–223 (WLIADPICSVFISIMIVSSVL). Residues 224 to 316 (PLLRNSAEIL…LTIQIECVKR (93 aa)) are Cytoplasmic-facing.

It belongs to the cation diffusion facilitator (CDF) transporter (TC 2.A.4) family. SLC30A subfamily.

Its subcellular location is the vacuole membrane. Its function is as follows. Involved in sequestration of excess metal in the cytoplasm into vacuoles to maintain metal homeostasis. This Oryza sativa subsp. japonica (Rice) protein is Metal tolerance protein 8 (MTP8).